The following is a 217-amino-acid chain: Protein canopy 4 (217 aa).

Residues 1–27 (MEMFTVFLFYMFSLVLANQEERLPNKC) form the signal peptide. 3 disulfide bridges follow: C27–C185, C30–C173, and C83–C145. A disordered region spans residues 194–217 (MGMKGSEEESEGKDGKETHDAGEL). The span at 205–217 (GKDGKETHDAGEL) shows a compositional bias: basic and acidic residues.

The protein belongs to the canopy family.

It is found in the secreted. The sequence is that of Protein canopy 4 (cnpy4) from Danio rerio (Zebrafish).